A 300-amino-acid chain; its full sequence is MKTNKIVFIFGPTAVGKSDILFHFPKGVAEVISVDSIQVYKEFDIASCKPSIELRSHIRHHLVDFLEPIYEYNLGIFYKESCKIIESLREQKKIPIFVGGSAFYFKHLKYGLPSAPPVSDKVRLYINNLFIRMGKDYLLEELRRVDFKRYESINQNDIYRIKRSLEVYFQTGIPISQFLQRENMFENIVAIGLRRPMDEMKSRIISRVKNMIDCGLLDEIKSLLGKGYDEKTPAFKGIGYREFLLWRSRPCYLLNDIINLIVKNSFLYVKRQMTFFNKLPNVLWFHPDDDLKNILDLIFV.

ATP is bound at residue 11-18; it reads GPTAVGKS. 13–18 contacts substrate; that stretch reads TAVGKS. Positions 35-38 are interaction with substrate tRNA; it reads DSIQ.

This sequence belongs to the IPP transferase family. In terms of assembly, monomer. Mg(2+) is required as a cofactor.

It carries out the reaction adenosine(37) in tRNA + dimethylallyl diphosphate = N(6)-dimethylallyladenosine(37) in tRNA + diphosphate. Functionally, catalyzes the transfer of a dimethylallyl group onto the adenine at position 37 in tRNAs that read codons beginning with uridine, leading to the formation of N6-(dimethylallyl)adenosine (i(6)A). The protein is tRNA dimethylallyltransferase of Borrelia recurrentis (strain A1).